We begin with the raw amino-acid sequence, 472 residues long: UDP-N-acetylmuramate--L-alanine ligase (472 aa).

ATP is bound at residue 121 to 127 (GTHGKTT).

The protein belongs to the MurCDEF family.

It localises to the cytoplasm. It carries out the reaction UDP-N-acetyl-alpha-D-muramate + L-alanine + ATP = UDP-N-acetyl-alpha-D-muramoyl-L-alanine + ADP + phosphate + H(+). Its pathway is cell wall biogenesis; peptidoglycan biosynthesis. Cell wall formation. In Hahella chejuensis (strain KCTC 2396), this protein is UDP-N-acetylmuramate--L-alanine ligase.